Consider the following 121-residue polypeptide: uncharacterized protein (121 aa).

Residues 7–121 enclose the HIT domain; that stretch reads IFCKIVRGEV…GGREMSWPPG (115 aa). The Histidine triad motif signature appears at 105–109; sequence HLHLH.

This is an uncharacterized protein from Aquifex aeolicus (strain VF5).